A 172-amino-acid polypeptide reads, in one-letter code: Adenine phosphoribosyltransferase (172 aa).

This sequence belongs to the purine/pyrimidine phosphoribosyltransferase family. As to quaternary structure, homodimer.

The protein localises to the cytoplasm. The enzyme catalyses AMP + diphosphate = 5-phospho-alpha-D-ribose 1-diphosphate + adenine. It participates in purine metabolism; AMP biosynthesis via salvage pathway; AMP from adenine: step 1/1. Its function is as follows. Catalyzes a salvage reaction resulting in the formation of AMP, that is energically less costly than de novo synthesis. The polypeptide is Adenine phosphoribosyltransferase (Synechococcus sp. (strain CC9311)).